A 259-amino-acid chain; its full sequence is Synaptophysin-like protein 1 (259 aa).

Over M1–L33 the chain is Cytoplasmic. In terms of domain architecture, MARVEL spans P28–S237. The helical transmembrane segment at G34–F54 threads the bilayer. Residues K55–Q116 lie on the Vesicular side of the membrane. A glycan (N-linked (GlcNAc...) asparagine) is linked at N71. Residues F117–V137 traverse the membrane as a helical segment. The Cytoplasmic segment spans residues G138 to P150. The helical transmembrane segment at M151 to W171 threads the bilayer. The Vesicular portion of the chain corresponds to A172–N212. An N-linked (GlcNAc...) asparagine glycan is attached at N212. Residues V213–Y233 form a helical membrane-spanning segment. At K234–I259 the chain is on the cytoplasmic side.

Belongs to the synaptophysin/synaptobrevin family.

It localises to the cytoplasmic vesicle membrane. The protein resides in the melanosome. In Homo sapiens (Human), this protein is Synaptophysin-like protein 1 (SYPL1).